Reading from the N-terminus, the 391-residue chain is MATAAAASLQYALHGAASASAKPRSAAPGRSVRVVAARRSVRARGGAVVARAAVTASADATAESKSGGHEVLLFEALREALIEEMKEDPTVCVFGEDVGHYGGSYKVTKGLAEMFGDLRVLDTPIAENSFAGMGVGAAMKGLRPIVEGMNMGFLLLAYNQISNNCGMLHYTSGGQFKIPIVIRGPGGVGRQLGAEHSQRLESYFQSIPGLQMVACSTPYNAKGLMKAAIRSENPVVLFEHVLLYNLKEKIPDEEYICCLEEAEMVRPGEHVTILTYSRMRYHVMQAAKTLVNKGYDPEVIDIRSLKPFDLHTIGNSIKKTHRVLIVEECMRTGGIGASLRSAIIDNFWDYLDAPIMCLSSQDVPTPYAATLEDATVVQPAQIVAAVEQICQ.

Residues 1–35 (MATAAAASLQYALHGAASASAKPRSAAPGRSVRVV) constitute a chloroplast transit peptide. Residue E127 participates in thiamine diphosphate binding. The K(+) site is built by I180, A228, I229, and N233.

In terms of assembly, tetramer of 2 alpha and 2 beta subunits. The cofactor is thiamine diphosphate.

It localises to the plastid. It is found in the chloroplast. The catalysed reaction is N(6)-[(R)-lipoyl]-L-lysyl-[protein] + pyruvate + H(+) = N(6)-[(R)-S(8)-acetyldihydrolipoyl]-L-lysyl-[protein] + CO2. Functionally, the pyruvate dehydrogenase complex catalyzes the overall conversion of pyruvate to acetyl-CoA and CO(2). It contains multiple copies of three enzymatic components: pyruvate dehydrogenase (E1), dihydrolipoamide acetyltransferase (E2) and lipoamide dehydrogenase (E3). This Oryza sativa subsp. japonica (Rice) protein is Pyruvate dehydrogenase E1 component subunit beta-3, chloroplastic.